Here is a 124-residue protein sequence, read N- to C-terminus: UPF0299 membrane protein VP1300 (124 aa).

4 consecutive transmembrane segments (helical) span residues 9–29, 35–55, 72–92, and 95–115; these read LIQLLISLFLIMGALGIGITI, VSVPGSVIGMLVLFFSMTLGL, MILLFVPISVGLMQHFDMLLA, and LPIIASAVGGSLIVLVSLAWL.

This sequence belongs to the UPF0299 family.

Its subcellular location is the cell inner membrane. The protein is UPF0299 membrane protein VP1300 of Vibrio parahaemolyticus serotype O3:K6 (strain RIMD 2210633).